The chain runs to 568 residues: TNF receptor-associated factor 3 (568 aa).

Residues Met1–Gly28 are disordered. Ser9 is subject to Phosphoserine. Residue Cys56 forms a Glycyl cysteine thioester (Cys-Gly) (interchain with G-Cter in ubiquitin) linkage. The RING-type zinc finger occupies Cys68 to Met77. A Glycyl cysteine thioester (Cys-Gly) (interchain with G-Cter in ubiquitin) cross-link involves residue Cys124. 2 consecutive TRAF-type zinc fingers follow at residues Val135 to Gln190 and Lys191 to Lys249. Residue Lys168 forms a Glycyl lysine isopeptide (Lys-Gly) (interchain with G-Cter in ubiquitin) linkage. A coiled-coil region spans residues Ser267–Arg338. A Glycyl lysine isopeptide (Lys-Gly) (interchain with G-Cter in ubiquitin) cross-link involves residue Lys329. Positions Leu392 to Asn415 are (Microbial infection) Interaction with glycoprotein N of Andes and New York hantaviruses. The MATH domain occupies Asn415–Val560.

The protein belongs to the TNF receptor-associated factor family. A subfamily. Homotrimer. Heterotrimer with TRAF2 and TRAF5. Interacts with LTBR/TNFRSF3, TNFRSF4, TNFRSF5/CD40, TNFRSF8/CD30, TNFRSF13C TNFRSF17/BCMA, TLR4 and EDAR. Interacts with MAP3K5, MAP3K14, TRAIP/TRIP, TDP2/TTRAP, TANK/ITRAF and TRAF3IP1. Interaction with TNFRSF5/CD40 is modulated by TANK/ITRAF, which competes for the same binding site. Interacts with TICAM1. Interacts with TRAFD1. Interacts with OTUB1, OTUB2 and OTUD5. Interacts with RNF216, OPTN and TBK1. Identified in a complex with TRAF2, MAP3K14 and BIRC3. Interacts with BIRC2 and BIRC3. Upon exposure to bacterial lipopolysaccharide (LPS), recruited to a transient complex containing TLR4, TRAF3, TRAF6, IKBKG, MAP3K7, MYD88, TICAM1, BIRC2, BIRC3 and UBE2N. Interacts (via RING-type zinc finger domain) with SRC. Interacts with CARD14. Interacts (via MATH domain) with PTPN22; the interaction promotes TRAF3 polyubiquitination. Interacts with MAVS. Directly interacts with DDX3X; this interaction stimulates TRAF3 'Lys-63' ubiquitination. Interacts with IRF3. Interacts with IKBKE in the course of Sendai virus infection. Interacts with TRIM35. Interacts with GAPDH; promoting TRAF3 ubiquitination. Interacts with PPP3CA and PPP3CB. Interacts with ATP1B1; promoting TRAF3 ubiquitination. Interacts with RALGDS. Interacts with FBXO11. In terms of assembly, (Microbial infection) Interacts (via N-terminus) with New York hantavirus glycoprotein N (via C-terminus); this interaction inhibits the formation of TRAF3-TBK1 complexes. As to quaternary structure, (Microbial infection) Interacts with Andes hantavirus glycoprotein N (via C-terminus); this interaction inhibits the formation of TRAF3-TBK1 complexes. (Microbial infection) Interacts with Tula hantavirus glycoprotein N (via C-terminus); this interaction inhibits the formation of TRAF3-TBK1 complexes. In terms of assembly, (Microbial infection) Interacts with Epstein-Barr virus protein LMP1. In terms of processing, undergoes 'Lys-48'-linked polyubiquitination, leading to its proteasomal degradation in response to signaling by TNFSF13B, TLR4 or through CD40. 'Lys-48'-linked polyubiquitinated form is deubiquitinated by OTUD7B, preventing TRAF3 proteolysis and over-activation of non-canonical NF-kappa-B. Undergoes 'Lys-63'-linked ubiquitination during early stages of virus infection, and 'Lys-48'-linked ubiquitination during later stages. Undergoes both 'Lys-48'-linked and 'Lys-63'-linked ubiquitination in response to TLR3 and TLR4 signaling. 'Lys-63'-linked ubiquitination can be mediated by TRIM35. Deubiquitinated by OTUB1, OTUB2 and OTUD5. Undergoes 'Lys-63'-linked deubiquitination by MYSM1 to terminate the pattern-recognition receptors/PRRs pathways. Also undergoes 'Lys-29'-linked ubiquitination on Cys-56 and Cys-124 by NEDD4L; leading to increased 'Lys-48'- and 'Lys-63'-linked ubiquitination as well as increased binding to TBK1. TLR4 signals emanating from bacteria containing vesicles trigger 'Lys-33'-linked polyubiquitination that promotes the assembly of the exocyst complex thereby connecting innate immune signaling to the cellular trafficking apparatus. Deubiquitinated by USP25 during viral infection, leading to TRAF3 stabilization and type I interferon production. Ubiquitinated at Lys-329 by the SCF(FBXL2) complex, leading to its degradation by the proteasome. 'Lys-63'-linked ubiquitination by FBXO11 in a NEDD8-dependent manner promotes the amplification of IFN-I signaling. (Microbial infection) Cleaved by enterovirus D68 protease 2A; leading to inhibition of NF-kappa-B or IFN-beta triggered by TRAF3.

The protein localises to the cytoplasm. Its subcellular location is the endosome. The protein resides in the mitochondrion. It catalyses the reaction S-ubiquitinyl-[E2 ubiquitin-conjugating enzyme]-L-cysteine + [acceptor protein]-L-lysine = [E2 ubiquitin-conjugating enzyme]-L-cysteine + N(6)-ubiquitinyl-[acceptor protein]-L-lysine.. Functionally, cytoplasmic E3 ubiquitin ligase that regulates various signaling pathways, such as the NF-kappa-B, mitogen-activated protein kinase (MAPK) and interferon regulatory factor (IRF) pathways, and thus controls a lot of biological processes in both immune and non-immune cell types. In TLR and RLR signaling pathways, acts as an E3 ubiquitin ligase promoting the synthesis of 'Lys-63'-linked polyubiquitin chains on several substrates such as ASC that lead to the activation of the type I interferon response or the inflammasome. Following the activation of certain TLRs such as TLR4, acts as a negative NF-kappa-B regulator, possibly to avoid unregulated inflammatory response, and its degradation via 'Lys-48'-linked polyubiquitination is required for MAPK activation and production of inflammatory cytokines. Alternatively, when TLR4 orchestrates bacterial expulsion, TRAF3 undergoes 'Lys-33'-linked polyubiquitination and subsequently binds to RALGDS, mobilizing the exocyst complex to rapidly expel intracellular bacteria back for clearance. Also acts as a constitutive negative regulator of the alternative NF-kappa-B pathway, which controls B-cell survival and lymphoid organ development. Required for normal antibody isotype switching from IgM to IgG. Plays a role T-cell dependent immune responses. Down-regulates proteolytic processing of NFKB2, and thereby inhibits non-canonical activation of NF-kappa-B. Promotes ubiquitination and proteasomal degradation of MAP3K14. In Homo sapiens (Human), this protein is TNF receptor-associated factor 3.